Reading from the N-terminus, the 632-residue chain is tRNA-guanine(15) transglycosylase (632 aa).

Residue aspartate 86 is the Nucleophile of the active site. Residues aspartate 121 and glycine 186 each contribute to the substrate site. The 76-residue stretch at 553-628 (NLRVFVKNES…IAVKIHEGRD (76 aa)) folds into the PUA domain.

Belongs to the archaeosine tRNA-ribosyltransferase family. Requires Zn(2+) as cofactor.

It catalyses the reaction guanosine(15) in tRNA + 7-cyano-7-deazaguanine = 7-cyano-7-carbaguanosine(15) in tRNA + guanine. It participates in tRNA modification; archaeosine-tRNA biosynthesis. Exchanges the guanine residue with 7-cyano-7-deazaguanine (preQ0) at position 15 in the dihydrouridine loop (D-loop) of archaeal tRNAs. This Thermoplasma volcanium (strain ATCC 51530 / DSM 4299 / JCM 9571 / NBRC 15438 / GSS1) protein is tRNA-guanine(15) transglycosylase.